A 643-amino-acid chain; its full sequence is Threonine--tRNA ligase (643 aa).

A TGS domain is found at Met1–Tyr61. Residues Asp244 to Pro535 are catalytic. Positions 335, 386, and 512 each coordinate Zn(2+).

The protein belongs to the class-II aminoacyl-tRNA synthetase family. As to quaternary structure, homodimer. Zn(2+) serves as cofactor.

The protein localises to the cytoplasm. It catalyses the reaction tRNA(Thr) + L-threonine + ATP = L-threonyl-tRNA(Thr) + AMP + diphosphate + H(+). Catalyzes the attachment of threonine to tRNA(Thr) in a two-step reaction: L-threonine is first activated by ATP to form Thr-AMP and then transferred to the acceptor end of tRNA(Thr). Also edits incorrectly charged L-seryl-tRNA(Thr). The polypeptide is Threonine--tRNA ligase (Buchnera aphidicola subsp. Baizongia pistaciae (strain Bp)).